A 374-amino-acid polypeptide reads, in one-letter code: Small ribosomal subunit protein uS4m (374 aa).

Residues 259-323 (GRLENFLMRL…KKLYFFIKSK (65 aa)) form the S4 RNA-binding domain.

It belongs to the universal ribosomal protein uS4 family.

It is found in the mitochondrion. The sequence is that of Small ribosomal subunit protein uS4m (RPS4) from Acanthamoeba castellanii (Amoeba).